The sequence spans 347 residues: Ileal sodium/bile acid cotransporter (347 aa).

Residues 1–29 (MSNLTVGCLANATVCEGASCVAPESNFNA) are Extracellular-facing. N-linked (GlcNAc...) asparagine glycosylation is found at Asn3 and Asn11. The chain crosses the membrane as a helical span at residues 30–50 (ILSVVLSTVLTILLALVMFSM). Residues 51–83 (GCNVEIKKFLGHIRRPWGIFIGFLCQFGIMPLT) are Cytoplasmic-facing. Residues 84–104 (GFVLAVAFGIMPIQAVVVLIM) form a helical membrane-spanning segment. Residues 105 to 127 (GCCPGGTASNILAYWVDGDMDLS) are Extracellular-facing. A helical membrane pass occupies residues 128–148 (VSMTTCSTLLALGMMPLCLYV). Topologically, residues 149-158 (YTKMWVDSGT) are cytoplasmic. Residues 159–179 (IVIPYDNIGTSLVALVVPVSI) form a helical membrane-spanning segment. The Extracellular segment spans residues 180 to 196 (GMFVNHKWPQKAKIILK). Residues 197 to 217 (VGSIAGAVLIVLIAVVGGILY) traverse the membrane as a helical segment. Residues 218 to 225 (QSAWIIEP) are Cytoplasmic-facing. The chain crosses the membrane as a helical span at residues 226-246 (KLWIIGTIFPMAGYSLGFFLA). Residues 247 to 289 (RIAGQPWYRCRTVALETGMQNTQLCSTIVQLSFSPEDLTYVFT) lie on the Extracellular side of the membrane. A helical transmembrane segment spans residues 290 to 310 (FPLIYSIFQIAFAAIFLGIYV). At 311-347 (AYRKCHGKNDAEFPDIKDTKTEPESSFHQMNGGFQPE) the chain is on the cytoplasmic side. Positions 323-335 (FPDIKDTKTEPES) are enriched in basic and acidic residues. The interval 323-347 (FPDIKDTKTEPESSFHQMNGGFQPE) is disordered. Residue Ser336 is modified to Phosphoserine.

This sequence belongs to the bile acid:sodium symporter (BASS) (TC 2.A.28) family. In terms of assembly, monomer and homodimer.

Its subcellular location is the membrane. It catalyses the reaction taurocholate(out) + 2 Na(+)(out) = taurocholate(in) + 2 Na(+)(in). The enzyme catalyses cholate(out) + 2 Na(+)(out) = cholate(in) + 2 Na(+)(in). The catalysed reaction is taurochenodeoxycholate(out) + 2 Na(+)(out) = taurochenodeoxycholate(in) + 2 Na(+)(in). It carries out the reaction tauroursodeoxycholate(out) + 2 Na(+)(out) = tauroursodeoxycholate(in) + 2 Na(+)(in). It catalyses the reaction glycocholate(out) + 2 Na(+)(out) = glycocholate(in) + 2 Na(+)(in). The enzyme catalyses tauronorcholate(out) + 2 Na(+)(out) = tauronorcholate(in) + 2 Na(+)(in). The catalysed reaction is tauroallocholate(out) + 2 Na(+)(out) = tauroallocholate(in) + 2 Na(+)(in). It carries out the reaction taurodeoxycholate(out) + 2 Na(+)(out) = taurodeoxycholate(in) + 2 Na(+)(in). It catalyses the reaction tauro-beta-muricholate(out) + 2 Na(+)(out) = tauro-beta-muricholate(in) + 2 Na(+)(in). Functionally, plays a critical role in the sodium-dependent reabsorption of bile acids from the lumen of the small intestine. Transports various bile acids, unconjugated or conjugated, such as cholate and taurocholate. Also responsible for bile acid transport in the renal proximal tubules, a salvage mechanism that helps conserve bile acids. Works collaboratively with the Na(+)-taurocholate cotransporting polypeptide (NTCP), the organic solute transporter (OST), and the bile salt export pump (BSEP), to ensure efficacious biological recycling of bile acids during enterohepatic circulation. In Oryctolagus cuniculus (Rabbit), this protein is Ileal sodium/bile acid cotransporter (SLC10A2).